The primary structure comprises 395 residues: Membrane glycoprotein spo14 (395 aa).

Residues 1–346 (MAELHLSFPA…KLEDAGVILR (346 aa)) lie on the Cytoplasmic side of the membrane. WD repeat units follow at residues 250–285 (MIRD…RFMS) and 290–326 (KLSQ…CLQF). The chain crosses the membrane as a helical; Signal-anchor for type II membrane protein span at residues 347–367 (LSLMFPFVLAILYFYLQLLFP). The Lumenal portion of the chain corresponds to 368 to 395 (DEKLDAIHRFFSFILHIFSKYTIRNYDL).

Its subcellular location is the endoplasmic reticulum membrane. It is found in the golgi apparatus. The protein resides in the cis-Golgi network membrane. In terms of biological role, required for the formation of transport vesicles from the ER. This function involves the cytoplasmic domain of the protein, which is thought to interact with the small GTP-binding protein sar1. The sequence is that of Membrane glycoprotein spo14 (spo14) from Schizosaccharomyces pombe (strain 972 / ATCC 24843) (Fission yeast).